Consider the following 227-residue polypeptide: Ribonuclease 3 (227 aa).

One can recognise an RNase III domain in the interval 5-127 (YQKLSRRIGY…IIGAMYLDAG (123 aa)). Glutamate 40 serves as a coordination point for Mg(2+). Residue aspartate 44 is part of the active site. Residues aspartate 113 and glutamate 116 each contribute to the Mg(2+) site. The active site involves glutamate 116. A DRBM domain is found at 154–224 (DAKTRLQEFL…AAKALKKLEK (71 aa)).

This sequence belongs to the ribonuclease III family. Homodimer. Requires Mg(2+) as cofactor.

It is found in the cytoplasm. It carries out the reaction Endonucleolytic cleavage to 5'-phosphomonoester.. Functionally, digests double-stranded RNA. Involved in the processing of primary rRNA transcript to yield the immediate precursors to the large and small rRNAs (23S and 16S). Processes some mRNAs, and tRNAs when they are encoded in the rRNA operon. Processes pre-crRNA and tracrRNA of type II CRISPR loci if present in the organism. This Marinomonas sp. (strain MWYL1) protein is Ribonuclease 3.